A 135-amino-acid polypeptide reads, in one-letter code: Large ribosomal subunit protein eL32 (135 aa).

The protein belongs to the eukaryotic ribosomal protein eL32 family.

This Methanococcus maripaludis (strain C7 / ATCC BAA-1331) protein is Large ribosomal subunit protein eL32.